A 723-amino-acid chain; its full sequence is MSKQGDDCYFYFYSTCNKGDNCPFRHCEAALGNETICTLWKEGRCFRNVCRFRHMEIDKKRSEIPCFWENQPGGCQKSNCAFHHTKGRYVDGLFLPPSKTTLPSPPESADDDLKAAQITLQQNKLSVQSNPSPQLRGVMKVENSENVPSPTHPPVVINAADDDEDDDDQLSEEGEETKTPVQQPAEENHNGLRIISTRKSNADTKQDDSLNFGIKTLEEIKLKKQKEKTKKQSEGPSGVPAHPLQSRTVPVPEKENVRTVVRTVTLSAKQGEEPVIRLNIAEKPGKRKGSVADVSGLPLKRSLAERLGRKIEVDKAPRREKGAKPAGEIHVKTLEEIRLERANQRGETLTAPQAEVCCKVEDPSSGVRPPPAVRIKTFSEALAERKQRRLEEEKQKLEEFLTEKRAEGERKKQRILPPSVPGKVKLEEPTRKIKPLEEVHIKTLEEIKQEKALRMQQSGENVPAPAAQPGPAPAGRKLLRITKLAAPGKEEKKTVELSRASPKAVSAPAEPSNQSAPNSKAQVKSLEGTVKEKLQLRQPEKLKKEVAAVPSATEETVKAKCKVCVKPSDSKASTPTKRALKRKAAEISPSAVAAVKPLSSTETEEPPAKKAALTAAPALPEDSLLTKPGVEKPPSSLELQLGSQADSVEQSGDSSSASASSQSVAKAQQLSSTGAGKAPLSVEDDFEKLIWEISGGKLEAEIDLDPGKDEDDLLLELSEMIDS.

C3H1-type zinc fingers lie at residues serine 2–alanine 29, leucine 31–isoleucine 57, and lysine 60–glycine 87. Disordered stretches follow at residues glutamate 142–aspartate 208, lysine 223–asparagine 256, lysine 404–glutamate 428, glutamate 450–leucine 526, and valine 565–serine 681. A compositionally biased stretch (acidic residues) spans alanine 160–glutamate 175. A coiled-coil region spans residues lysine 376–lysine 411. The span at proline 511–glutamine 522 shows a compositional bias: polar residues. The segment covering lysine 609–proline 620 has biased composition (low complexity). Polar residues predominate over residues leucine 637–glutamate 649. The segment covering glutamine 650–serine 672 has biased composition (low complexity).

Its subcellular location is the nucleus speckle. Functionally, through its association with TREX complex components, may participate in the export and post-transcriptional coordination of selected mRNA transcripts. Binds RNA. The polypeptide is Zinc finger CCCH domain-containing protein 11A (ZC3H11A) (Gallus gallus (Chicken)).